Reading from the N-terminus, the 267-residue chain is X-box-binding protein 1 (267 aa).

Topologically, residues 1–180 (MVVVAAAPSA…VQAQLSPPQN (180 aa)) are cytoplasmic. Residues 35–56 (VPGPRAAGSEASGTPQARKRQR) are disordered. The residue at position 61 (S61) is a Phosphoserine. A bZIP domain is found at 63 to 126 (EEKALRRKLK…HGLVVENQEL (64 aa)). The segment at 65 to 87 (KALRRKLKNRVAAQTARDRKKAR) is basic motif. Positions 69-85 (RKLKNRVAAQTARDRKK) are nuclear localization signal (NLS). Residues 91–126 (LEQQVVDLEEENHKLQLENQLLREKTHGLVVENQEL) are leucine-zipper. Residues 181–198 (IFPWTLTLLPLQILSLIS) form a helical; Signal-anchor for type II membrane protein membrane-spanning segment. Topologically, residues 199-267 (FWAFWTSWTL…FVLTMYTPSL (69 aa)) are lumenal. Residues 230-256 (QKDLVPYQPPFLCQWGPHQPSWKPLMN) form a necessary for the translational pausing of its own mRNA region.

Belongs to the bZIP family. Isoform 1 interacts with HM13. Isoform 1 interacts with RNF139; the interaction induces ubiquitination and degradation of isoform 1. Isoform 1 interacts (via luminal domain) with DERL1; the interaction obviates the need for ectodomain shedding prior HM13/SPP-mediated XBP1 isoform 1 cleavage. Isoform 1 interacts with isoform 2; the interaction sequesters isoform 2 from the nucleus and enhances isoform 2 degradation in the cytoplasm. Isoform 1 interacts with HDAC3 and AKT1; the interactions occur in endothelial cell (EC) under disturbed flow. Isoform 1 interacts with the oncoprotein FOS. Isoform 2 interacts with ATF6; the interaction occurs in a ER stress-dependent manner and is required for DNA binding to the unfolded protein response element (UPRE). Isoform 2 interacts with PIK3R1; the interaction is direct and induces translocation of XBP1 isoform 2 into the nucleus and the unfolded protein response (UPR) XBP1-dependent target genes activation in a ER stress- and/or insulin-dependent but PI3K-independent manner. Isoform 2 interacts with SIRT1. Isoform 2 interacts with PIK3R1 and PIK3R2; the interactions are direct and induce translocation of XBP1 isoform 2 into the nucleus and the unfolded protein response (UPR) XBP1-dependent target genes activation in a ER stress- and/or insulin-dependent but PI3K-independent manner. Isoform 2 interacts with FOXO1; the interaction is direct and leads to FOXO1 ubiquitination and degradation via the proteasome pathway in hepatocytes. Acetylated by EP300; acetylation positively regulates the transcriptional activity of XBP1 isoform 2. Isoform 2 is deacetylated by SIRT1; deacetylation negatively regulates the transcriptional activity of XBP1 isoform 2. In terms of processing, ubiquitinated, leading to proteasomal degradation in response to ER stress. Post-translationally, X-box-binding protein 1, cytoplasmic form and luminal form are produced by intramembrane proteolytic cleavage of ER membrane-anchored isoform 1 triggered by HM13/SPP in a DERL1-RNF139-dependent and VCP/p97-independent manner. X-box-binding protein 1, luminal form is ubiquitinated leading to proteasomal degradation. Isoform 1 and isoform 2 are expressed at higher level in branch curves of vessel walls and in atherosclerotic plaques relative to healthy segments of the same aortas (at protein level). Expressed in skeletal muscles, plasma cells and pancreatic beta cells. Isoform 1 and isoform 2 are expressed in gonadal adipose tissue. Isoform 1 is expressed in inguinal adipose tissue.

The protein resides in the endoplasmic reticulum. It localises to the nucleus. The protein localises to the cytoplasm. Its subcellular location is the endoplasmic reticulum membrane. It is found in the membrane. Functionally, functions as a transcription factor during endoplasmic reticulum stress by regulating the unfolded protein response (UPR). Required for cardiac myogenesis and hepatogenesis during embryonic development and the development of secretory tissues such as exocrine pancreas and salivary gland. Involved in differentiation of B lymphocytes to plasma cells and production of immunoglobulins. Modulates the cellular response to ER stress in a PIK3R-dependent manner. Binds to the cis-acting X box present in the promoter regions of major histocompatibility complex class II genes. Involved in VEGF-induced endothelial cell (EC) proliferation and retinal blood vessel formation during embryonic development but also for angiogenesis in adult tissues under ischemic conditions. Also functions as a major regulator of the UPR in obesity-induced insulin resistance and type 2 diabetes for the management of obesity and diabetes prevention. In terms of biological role, plays a role in the unconventional cytoplasmic splicing processing of its own mRNA triggered by the endoplasmic reticulum (ER) transmembrane endoribonuclease ERN1: upon ER stress, the emerging XBP1 polypeptide chain, as part of a mRNA-ribosome-nascent chain (R-RNC) complex, cotranslationally recruits its own unprocessed mRNA through transient docking to the ER membrane and translational pausing, therefore facilitating efficient IRE1-mediated XBP1 mRNA isoform 2 production. In endothelial cells (EC), associated with KDR, promotes IRE1-mediated XBP1 mRNA isoform 2 production in a vascular endothelial growth factor (VEGF)-dependent manner, leading to EC proliferation and angiogenesis. Functions as a negative feed-back regulator of the potent transcription factor XBP1 isoform 2 protein levels through proteasome-mediated degradation, thus preventing the constitutive activation of the ER stress response signaling pathway. Inhibits the transactivation activity of XBP1 isoform 2 in myeloma cells. Acts as a weak transcriptional factor. Together with HDAC3, contributes to the activation of NFE2L2-mediated HMOX1 transcription factor gene expression in a PI(3)K/mTORC2/Akt-dependent signaling pathway leading to EC survival under disturbed flow/oxidative stress. Binds to the ER stress response element (ERSE) upon ER stress. Binds to the consensus 5'-GATGACGTG[TG]N(3)[AT]T-3' sequence related to cAMP responsive element (CRE)-like sequences. Binds the Tax-responsive element (TRE) present in the long terminal repeat (LTR) of T-cell leukemia virus type 1 (HTLV-I) and to the TPA response elements (TRE). Associates preferentially to the HDAC3 gene promoter region in a static flow-dependent manner. Binds to the CDH5/VE-cadherin gene promoter region. Functions as a stress-inducible potent transcriptional activator during endoplasmic reticulum (ER) stress by inducing unfolded protein response (UPR) target genes via binding to the UPR element (UPRE). Up-regulates target genes encoding ER chaperones and ER-associated degradation (ERAD) components to enhance the capacity of productive folding and degradation mechanism, respectively, in order to maintain the homeostasis of the ER under ER stress. Plays a role in the production of immunoglobulins and interleukin-6 in the presence of stimuli required for plasma cell differentiation, and promotes as well membrane phospholipid biosynthesis necessary for ER expansion. Contributes to the VEGF-induced endothelial cell (EC) growth and proliferation in a Akt/GSK-dependent and/or -independent signaling pathway, respectively, leading to beta-catenin nuclear translocation and E2F2 gene expression. Promotes umbilical vein EC apoptosis and atherosclerotisis development in a caspase-dependent signaling pathway, and contributes to VEGF-induced EC proliferation and angiogenesis in adult tissues under ischemic conditions. Involved in the regulation of endostatin-induced autophagy in EC through BECN1 transcriptional activation. Plays a role as an oncogene by promoting tumor progression: stimulates zinc finger protein SNAI1 transcription to induce epithelial-to-mesenchymal (EMT) transition, cell migration and invasion of breast cancer cells. Involved in adipocyte differentiation by regulating lipogenic gene expression during lactation. Plays a role in the survival of both dopaminergic neurons of the substantia nigra pars compacta (SNpc), by maintaining protein homeostasis and of myeloma cells. Increases insulin sensitivity in the liver as a response to a high carbohydrate diet, resulting in improved glucose tolerance. Also improves glucose homeostasis in an ER stress- and/or insulin-independent manner through both binding and proteasome-induced degradation of the transcription factor FOXO1, hence resulting in suppression of gluconeogenic genes expression and in a reduction of blood glucose levels. Controls the induction of de novo fatty acid synthesis in hepatocytes by regulating the expression of a subset of lipogenic genes in an ER stress- and UPR-independent manner. Binds to the 5'-CCACG-3' motif in the PPARG promoter. Associates preferentially to the HDAC3 gene promoter region in a disturbed flow-dependent manner. Binds to the BECN1 gene promoter region. Binds to the CDH5/VE-cadherin gene promoter region. Binds to the ER stress response element (ERSE) upon ER stress. The sequence is that of X-box-binding protein 1 from Mus musculus (Mouse).